A 212-amino-acid polypeptide reads, in one-letter code: Glycerol-3-phosphate acyltransferase (212 aa).

Transmembrane regions (helical) follow at residues 3-23, 51-71, 78-98, 115-135, and 139-159; these read ILLAALIAYLIGSVSFAVIVS, KAAILTLIGDAFKGWIAVWLA, DVAIAWVAIAVFIGHLYPVFF, AVHPVLGLATALTWLIIAFFF, and SLAALVAAVFAPLFDVFLFGT.

It belongs to the PlsY family. As to quaternary structure, probably interacts with PlsX.

It localises to the cell inner membrane. It carries out the reaction an acyl phosphate + sn-glycerol 3-phosphate = a 1-acyl-sn-glycero-3-phosphate + phosphate. It participates in lipid metabolism; phospholipid metabolism. In terms of biological role, catalyzes the transfer of an acyl group from acyl-phosphate (acyl-PO(4)) to glycerol-3-phosphate (G3P) to form lysophosphatidic acid (LPA). This enzyme utilizes acyl-phosphate as fatty acyl donor, but not acyl-CoA or acyl-ACP. The sequence is that of Glycerol-3-phosphate acyltransferase from Burkholderia multivorans (strain ATCC 17616 / 249).